The chain runs to 132 residues: Glycine cleavage system H protein (132 aa).

In terms of domain architecture, Lipoyl-binding spans 24-107 (TATIGLSAFA…GEEGWLIKVR (84 aa)). Lys-65 carries the post-translational modification N6-lipoyllysine.

Belongs to the GcvH family. In terms of assembly, the glycine cleavage system is composed of four proteins: P, T, L and H. (R)-lipoate serves as cofactor.

The glycine cleavage system catalyzes the degradation of glycine. The H protein shuttles the methylamine group of glycine from the P protein to the T protein. This chain is Glycine cleavage system H protein, found in Synechocystis sp. (strain ATCC 27184 / PCC 6803 / Kazusa).